A 183-amino-acid polypeptide reads, in one-letter code: Small ribosomal subunit protein cS23y (183 aa).

The protein belongs to the chloroplast-specific ribosomal protein cS23 family. As to quaternary structure, part of the 30S ribosomal subunit.

Its subcellular location is the plastid. It is found in the chloroplast. Its function is as follows. Component of the chloroplast ribosome (chloro-ribosome), a dedicated translation machinery responsible for the synthesis of chloroplast genome-encoded proteins, including proteins of the transcription and translation machinery and components of the photosynthetic apparatus. This chain is Small ribosomal subunit protein cS23y, found in Arabidopsis thaliana (Mouse-ear cress).